The chain runs to 376 residues: Phosphoserine aminotransferase (376 aa).

R42 contacts L-glutamate. Residues W104, T163, D188, and Q211 each coordinate pyridoxal 5'-phosphate. The residue at position 212 (K212) is an N6-(pyridoxal phosphate)lysine. Position 253–254 (253–254 (NT)) interacts with pyridoxal 5'-phosphate.

It belongs to the class-V pyridoxal-phosphate-dependent aminotransferase family. SerC subfamily. In terms of assembly, homodimer. Requires pyridoxal 5'-phosphate as cofactor.

It localises to the cytoplasm. It carries out the reaction O-phospho-L-serine + 2-oxoglutarate = 3-phosphooxypyruvate + L-glutamate. It catalyses the reaction 4-(phosphooxy)-L-threonine + 2-oxoglutarate = (R)-3-hydroxy-2-oxo-4-phosphooxybutanoate + L-glutamate. Its pathway is amino-acid biosynthesis; L-serine biosynthesis; L-serine from 3-phospho-D-glycerate: step 2/3. The protein operates within cofactor biosynthesis; pyridoxine 5'-phosphate biosynthesis; pyridoxine 5'-phosphate from D-erythrose 4-phosphate: step 3/5. In terms of biological role, catalyzes the reversible conversion of 3-phosphohydroxypyruvate to phosphoserine and of 3-hydroxy-2-oxo-4-phosphonooxybutanoate to phosphohydroxythreonine. The chain is Phosphoserine aminotransferase from Bordetella avium (strain 197N).